The following is a 38-amino-acid chain: Iota-conotoxin-like L11.5 (38 aa).

4 disulfide bridges follow: C5-C19, C12-C24, C18-C29, and C23-C36.

The protein belongs to the conotoxin I1 superfamily. As to expression, expressed by the venom duct.

It localises to the secreted. Its function is as follows. Iota-conotoxins bind to voltage-gated sodium channels (Nav) and act as agonists by shifting the voltage-dependence of activation to more hyperpolarized levels. Produces general excitatory symptoms. The chain is Iota-conotoxin-like L11.5 from Conus lynceus (Lynceus cone).